A 64-amino-acid chain; its full sequence is Long neurotoxin MS5 (64 aa).

Cystine bridges form between Cys-3/Cys-24, Cys-6/Cys-11, Cys-17/Cys-41, Cys-45/Cys-57, and Cys-58/Cys-63.

It belongs to the three-finger toxin family. Ancestral subfamily. As to expression, expressed by the venom gland.

The protein localises to the secreted. In terms of biological role, produces peripheral paralysis by blocking neuromuscular transmission at the postsynaptic site. Very weak inhibitor of the endogenous nicotinic acetylcholine receptors (nAChR) in the human rhabdomyosarcoma TE 671 cell line. This neurotoxin is lethal to zebrafish by injection at the back of the dorsolateral region, but is not toxic to mice by intraperitoneal injection. In Micrurus surinamensis (Surinam coral snake), this protein is Long neurotoxin MS5.